A 110-amino-acid chain; its full sequence is Protein RALF-like 19 (110 aa).

Residues 1–23 (MGIKILLILGLLTLAVVAESANA) form the signal peptide. A propeptide spans 24–58 (TWTLTKSCVNGQGCIGEDGELDYLMDSETNRRQLA) (removed in mature form). 2 disulfide bridges follow: C76–C86 and C99–C105.

It belongs to the plant rapid alkalinization factor (RALF) family. In terms of processing, proteolytically cleaved, probably by S1P, a subtilisin-like serine protease (subtilase).

The protein localises to the secreted. Functionally, cell signaling peptide that may regulate plant stress, growth, and development. Mediates a rapid alkalinization of extracellular space by mediating a transient increase in the cytoplasmic Ca(2+) concentration leading to a calcium-dependent signaling events through a cell surface receptor and a concomitant activation of some intracellular mitogen-activated protein kinases. The sequence is that of Protein RALF-like 19 (RALFL19) from Arabidopsis thaliana (Mouse-ear cress).